The sequence spans 236 residues: Oligogalacturonate-specific porin KdgM (236 aa).

The first 20 residues, 1–20 (MKIKLLTLAVASLVSVNALA), serve as a signal peptide directing secretion.

It belongs to the oligogalacturonate-specific porin KdgM (TC 1.B.35) family. Monomer.

It is found in the cell outer membrane. Functionally, porin specific for oligogalacturonides. Also required for full virulence. This Dickeya dadantii (strain 3937) (Erwinia chrysanthemi (strain 3937)) protein is Oligogalacturonate-specific porin KdgM (kdgM).